Reading from the N-terminus, the 148-residue chain is Large ribosomal subunit protein bL9 (148 aa).

This sequence belongs to the bacterial ribosomal protein bL9 family.

In terms of biological role, binds to the 23S rRNA. The polypeptide is Large ribosomal subunit protein bL9 (Heliobacterium modesticaldum (strain ATCC 51547 / Ice1)).